A 461-amino-acid chain; its full sequence is uncharacterized protein (461 aa).

A run of 2 helical transmembrane segments spans residues 18 to 38 and 124 to 144; these read IITW…FLIY and FIFL…ILSI. PLD phosphodiesterase domains are found at residues 197–224 and 374–401; these read YNYR…ADEY and TPGF…DYRS.

Belongs to the phospholipase D family. Cardiolipin synthase subfamily.

The protein resides in the cell membrane. This is an uncharacterized protein from Streptococcus mutans serotype c (strain ATCC 700610 / UA159).